The primary structure comprises 149 residues: Nascent polypeptide-associated complex subunit beta-2 (149 aa).

In terms of domain architecture, NAC-A/B spans 38–103; that stretch reads DKDNTKLQAE…PKENTLNGLY (66 aa).

It belongs to the NAC-beta family. As to quaternary structure, part of the nascent polypeptide-associated complex (NAC), consisting of EGD2 and either EGD1 or BTT1. NAC associates with ribosomes via EGD1 or BTT1.

The protein resides in the cytoplasm. It localises to the nucleus. In terms of biological role, acts as a component of the nascent polypeptide-associated complex (NAC), which promotes mitochondrial protein import by enhancing productive ribosome interactions with the outer mitochondrial membrane. Also blocks the inappropriate interaction of ribosomes translating non-secretory nascent polypeptides with translocation sites in the membrane of the endoplasmic reticulum. BTT1 may act as a transcription factor that exert a negative effect on the expression of several genes that are transcribed by RNA polymerase II. This chain is Nascent polypeptide-associated complex subunit beta-2 (BTT1), found in Saccharomyces cerevisiae (strain ATCC 204508 / S288c) (Baker's yeast).